The following is a 324-amino-acid chain: Endochitinase 1 (324 aa).

The N-terminal stretch at 1–22 (MSFLQALSIFLLLLLYVVVGSA) is a signal peptide. One can recognise a Chitin-binding type-1 domain in the interval 23–64 (EQCGRQAGGALCPGGLCCSQFGWCGSTADYCTVPGCQSQCSG). Intrachain disulfides connect cysteine 25–cysteine 40, cysteine 34–cysteine 46, cysteine 39–cysteine 53, cysteine 58–cysteine 62, cysteine 95–cysteine 158, cysteine 170–cysteine 178, and cysteine 277–cysteine 309. Glutamate 139 serves as the catalytic Proton donor. The propeptide at 318-324 (GVSVDSM) is removed in mature form.

It belongs to the glycosyl hydrolase 19 family. Chitinase class I subfamily.

It catalyses the reaction Random endo-hydrolysis of N-acetyl-beta-D-glucosaminide (1-&gt;4)-beta-linkages in chitin and chitodextrins.. Its function is as follows. Defense against chitin-containing fungal pathogens. The sequence is that of Endochitinase 1 from Gossypium hirsutum (Upland cotton).